The sequence spans 447 residues: Dimethylsulfoniopropionate lyase DddP (447 aa).

A disordered region spans residues 1-26 (MNRHFNATRKIDPSRGATLGDGSPND). 6 residues coordinate a divalent metal cation: Asp295, Asp297, Asp307, His371, Glu406, and Glu421.

Belongs to the peptidase M24B family. In terms of assembly, homodimer. The cofactor is a divalent metal cation.

It catalyses the reaction S,S-dimethyl-beta-propiothetin = acrylate + dimethyl sulfide + H(+). Able to cleave dimethylsulfoniopropionate (DMSP), releasing dimethyl sulfide (DMS). DMS is the principal form by which sulfur is transported from oceans to the atmosphere. The real activity of the protein is however subject to debate and it is unclear whether it constitutes a real dimethylsulfoniopropionate lyase in vivo: the low activity with DMSP as substrate suggests that DMSP is not its native substrate. The protein is Dimethylsulfoniopropionate lyase DddP of Roseobacter denitrificans (strain ATCC 33942 / OCh 114) (Erythrobacter sp. (strain OCh 114)).